We begin with the raw amino-acid sequence, 58 residues long: Large ribosomal subunit protein bL32 (58 aa).

Belongs to the bacterial ribosomal protein bL32 family.

The protein is Large ribosomal subunit protein bL32 of Caldicellulosiruptor bescii (strain ATCC BAA-1888 / DSM 6725 / KCTC 15123 / Z-1320) (Anaerocellum thermophilum).